We begin with the raw amino-acid sequence, 500 residues long: NAD(P)H-quinone oxidoreductase chain 4, chloroplastic (500 aa).

14 consecutive transmembrane segments (helical) span residues 4–24, 35–55, 87–107, 113–130, 134–154, 167–187, 211–231, 242–262, 272–292, 305–325, 330–350, 386–406, 416–436, and 462–482; these read FPWL…MLFL, YTIC…CYNF, IGTI…AFPV, LFHF…GSFS, LLLF…LLAM, FILY…GLSL, ILFY…IPLH, HYST…YGLV, AHSM…IYAA, IAYS…SITD, GAIL…FLAG, LALP…GIIT, ILII…LLSM, and LFLS…PDFV.

It belongs to the complex I subunit 4 family.

It is found in the plastid. It localises to the chloroplast thylakoid membrane. It catalyses the reaction a plastoquinone + NADH + (n+1) H(+)(in) = a plastoquinol + NAD(+) + n H(+)(out). It carries out the reaction a plastoquinone + NADPH + (n+1) H(+)(in) = a plastoquinol + NADP(+) + n H(+)(out). This is NAD(P)H-quinone oxidoreductase chain 4, chloroplastic from Lepidium virginicum (Virginia pepperweed).